A 787-amino-acid polypeptide reads, in one-letter code: LPS-assembly protein LptD (787 aa).

The signal sequence occupies residues 1-24; sequence MKKSFPTLLATLVWSALYSQHALA.

This sequence belongs to the LptD family. As to quaternary structure, component of the lipopolysaccharide transport and assembly complex. Interacts with LptE and LptA.

It is found in the cell outer membrane. In terms of biological role, together with LptE, is involved in the assembly of lipopolysaccharide (LPS) at the surface of the outer membrane. This is LPS-assembly protein LptD from Pectobacterium atrosepticum (strain SCRI 1043 / ATCC BAA-672) (Erwinia carotovora subsp. atroseptica).